The primary structure comprises 557 residues: Leucine-rich glioma-inactivated protein 1 (557 aa).

A signal peptide spans 1–34 (MESERSKRMGNACIPLKRIAYFLCLLSALLLTEG). The LRRNT domain maps to 35 to 72 (KKPAKPKCPAVCTCTKDNALCENARSIPRTVPPDVISL). LRR repeat units follow at residues 92 to 113 (SLQL…AFIG), 116 to 137 (HLEY…TFRG), and 140 to 161 (SLIH…IFKG). In terms of domain architecture, LRRCT spans 173–223 (NSFNCDCKLKWLVEWLGHTNATVEDIYCEGPPEYKKRKINSLSSKDFDCII). N-linked (GlcNAc...) asparagine glycosylation is present at Asn192. EAR repeat units lie at residues 225 to 267 (EFAK…EWDH), 271 to 313 (TFRN…KRDS), 317 to 364 (KFIK…KWNG), 366 to 415 (GFYS…QWNK), 419 to 462 (LFTN…KWGG), 464 to 506 (SFQD…NWDA), and 510 to 552 (KFVK…KHVI). N-linked (GlcNAc...) asparagine glycosylation is present at Asn277. N-linked (GlcNAc...) asparagine glycosylation occurs at Asn422.

Oligomer. Interacts with KCNA1 within a complex containing KCNA1, KCNA4 and KCNAB1. Part of a complex containing ADAM22, DLG4/PSD95 and CACNG2 (stargazin). Can bind to ADAM11 and ADAM23. In terms of processing, glycosylated.

The protein localises to the secreted. It is found in the synapse. The protein resides in the cytoplasm. In terms of biological role, regulates voltage-gated potassium channels assembled from KCNA1, KCNA4 and KCNAB1. It slows down channel inactivation by precluding channel closure mediated by the KCNAB1 subunit. Ligand for ADAM22 that positively regulates synaptic transmission mediated by AMPA-type glutamate receptors. Plays a role in suppressing the production of MMP1/3 through the phosphatidylinositol 3-kinase/ERK pathway. The chain is Leucine-rich glioma-inactivated protein 1 (LGI1) from Pongo abelii (Sumatran orangutan).